The primary structure comprises 71 residues: Small, acid-soluble spore protein 2 (71 aa).

It belongs to the alpha/beta-type SASP family.

Functionally, SASP are bound to spore DNA. They are double-stranded DNA-binding proteins that cause DNA to change to an a-like conformation. They protect the DNA backbone from chemical and enzymatic cleavage and are thus involved in dormant spore's high resistance to UV light. This is Small, acid-soluble spore protein 2 from Bacillus subtilis.